The sequence spans 645 residues: Matrix metalloproteinase-24 (645 aa).

The segment covering 1–10 (MPRSRGGRAA) has biased composition (low complexity). The interval 1–26 (MPRSRGGRAAPGPPPPPPPPGQAPRW) is disordered. Residues 1–52 (MPRSRGGRAAPGPPPPPPPPGQAPRWSRWRVPGRLLLLLLPALCCLPGAARA) form the signal peptide. The span at 11 to 22 (PGPPPPPPPPGQ) shows a compositional bias: pro residues. The propeptide occupies 53-155 (AAAAAGAGNR…HLSRRRRNKR (103 aa)). Residues 53-602 (AAAAAGAGNR…INDVPGSVNA (550 aa)) lie on the Extracellular side of the membrane. The Cysteine switch signature appears at 137–144 (PRCGVPDH). Zn(2+)-binding residues include Cys139 and His282. Glu283 is a catalytic residue. Zn(2+) is bound by residues His286 and His292. Positions 323 to 380 (QKIYGPPAEPLEPTRPLPTLPVRRIHSPSERKHERQPRPPRPPLGDRPSTPGTKPNIC) are disordered. The span at 329–341 (PAEPLEPTRPLPT) shows a compositional bias: pro residues. Basic and acidic residues predominate over residues 349–359 (SPSERKHERQP). Hemopexin repeat units lie at residues 377 to 425 (PNIC…WKGL), 426 to 471 (PARI…GSCL), 473 to 521 (REGI…KGIP), and 522 to 569 (QAPQ…WMGC). A disulfide bridge links Cys380 with Cys569. Residues 603 to 623 (VAVVIPCILSLCILVLVYTIF) traverse the membrane as a helical segment. Over 624 to 645 (QFKNKTGPQPVTYYKRPVQEWV) the chain is Cytoplasmic. Positions 643–645 (EWV) match the PDZ-binding motif.

This sequence belongs to the peptidase M10A family. In terms of assembly, interacts (via PDZ-binding motif) with APBA3 (via PDZ domain). Interacts with GRIP1 and GRIP2. Zn(2+) is required as a cofactor. Requires Ca(2+) as cofactor. Post-translationally, cleaved by a furin endopeptidase in the trans-Golgi network. Predominantly expressed in brain, kidney, pancreas and lung. Overexpressed in a series of brain tumors, including astrocytomas and glioblastomas.

Its subcellular location is the cell membrane. It is found in the golgi apparatus. It localises to the trans-Golgi network membrane. The protein resides in the secreted. The protein localises to the extracellular space. Its subcellular location is the extracellular matrix. Functionally, metalloprotease that mediates cleavage of N-cadherin (CDH2) and acts as a regulator of neuro-immune interactions and neural stem cell quiescence. Involved in cell-cell interactions between nociceptive neurites and mast cells, possibly by mediating cleavage of CDH2, thereby acting as a mediator of peripheral thermal nociception and inflammatory hyperalgesia. Key regulator of neural stem cells quiescence by mediating cleavage of CDH2, affecting CDH2-mediated anchorage of neural stem cells to ependymocytes in the adult subependymal zone, leading to modulate their quiescence. May play a role in axonal growth. Able to activate progelatinase A. May also be a proteoglycanase involved in degradation of proteoglycans, such as dermatan sulfate and chondroitin sulfate proteoglycans. Cleaves partially fibronectin, but not collagen type I, nor laminin. The sequence is that of Matrix metalloproteinase-24 (MMP24) from Homo sapiens (Human).